We begin with the raw amino-acid sequence, 487 residues long: N-succinylglutamate 5-semialdehyde dehydrogenase (487 aa).

Residue 221-226 coordinates NAD(+); that stretch reads GSSDTG. Active-site residues include glutamate 244 and cysteine 278.

The protein belongs to the aldehyde dehydrogenase family. AstD subfamily.

It carries out the reaction N-succinyl-L-glutamate 5-semialdehyde + NAD(+) + H2O = N-succinyl-L-glutamate + NADH + 2 H(+). Its pathway is amino-acid degradation; L-arginine degradation via AST pathway; L-glutamate and succinate from L-arginine: step 4/5. In terms of biological role, catalyzes the NAD-dependent reduction of succinylglutamate semialdehyde into succinylglutamate. This Burkholderia mallei (strain ATCC 23344) protein is N-succinylglutamate 5-semialdehyde dehydrogenase.